The primary structure comprises 676 residues: E3 ubiquitin-protein ligase ICP0 (676 aa).

An RING-type zinc finger spans residues C13 to K52. 3 disordered regions span residues D101–A153, H266–Q517, and A555–Q676. The segment covering E123 to A153 has biased composition (gly residues). The span at S286–E303 shows a compositional bias: acidic residues. Over residues S304–T314 the composition is skewed to low complexity. The span at A315 to E328 shows a compositional bias: acidic residues. Polar residues predominate over residues Y351–A361. Composition is skewed to low complexity over residues G375–S388 and L397–A411. The segment covering G422–S439 has biased composition (gly residues). A compositionally biased stretch (basic and acidic residues) spans E440–L450. A compositionally biased stretch (pro residues) spans T474 to A484. The segment covering A555–P597 has biased composition (low complexity).

Belongs to the simplexviruses ICp0 family. In terms of processing, auto-ubiquitinated. Transactivation activity is possibly regulated through phosphorylation by casein kinase II.

It catalyses the reaction S-ubiquitinyl-[E2 ubiquitin-conjugating enzyme]-L-cysteine + [acceptor protein]-L-lysine = [E2 ubiquitin-conjugating enzyme]-L-cysteine + N(6)-ubiquitinyl-[acceptor protein]-L-lysine.. Evades nuclear antiviral defenses triggered by dsDNA viruses. Acts during the initial stages of lytic infection and the reactivation of latent viral genome. Prevents the antiviral effect of nuclear bodies by degrading host PML and SP100. This is E3 ubiquitin-protein ligase ICP0 (BICP0) from Bovine herpesvirus 1.1 (strain Cooper) (BoHV-1).